The primary structure comprises 350 residues: Biotin synthase (350 aa).

In terms of domain architecture, Radical SAM core spans 38 to 256 (NHVQVSTLLS…IAVARIMMPE (219 aa)). [4Fe-4S] cluster-binding residues include Cys53, Cys57, and Cys60. Cys97, Cys128, Cys188, and Arg260 together coordinate [2Fe-2S] cluster.

This sequence belongs to the radical SAM superfamily. Biotin synthase family. In terms of assembly, homodimer. [4Fe-4S] cluster serves as cofactor. The cofactor is [2Fe-2S] cluster.

It catalyses the reaction (4R,5S)-dethiobiotin + (sulfur carrier)-SH + 2 reduced [2Fe-2S]-[ferredoxin] + 2 S-adenosyl-L-methionine = (sulfur carrier)-H + biotin + 2 5'-deoxyadenosine + 2 L-methionine + 2 oxidized [2Fe-2S]-[ferredoxin]. It functions in the pathway cofactor biosynthesis; biotin biosynthesis; biotin from 7,8-diaminononanoate: step 2/2. Its function is as follows. Catalyzes the conversion of dethiobiotin (DTB) to biotin by the insertion of a sulfur atom into dethiobiotin via a radical-based mechanism. The sequence is that of Biotin synthase from Aliivibrio fischeri (strain MJ11) (Vibrio fischeri).